Consider the following 556-residue polypeptide: PPE family protein PPE2 (556 aa).

The PPE stretch occupies residues 8–164 (ASPPEVHSAL…ASYQAVSTAA (157 aa)). An SH3-like region spans residues 201–256 (QKIGYTDFYNNVIQPFINWLTNLPFLQAMFSGFDPWLPSLGNPLTFLSPANIAFAL). The interval 319–340 (LEQTLALLPAALPLLAAPLAPL) is leucine zipper motif. Disordered regions lie at residues 385–418 (TPTP…PPVT) and 443–556 (GTGV…TRVE). The span at 400-417 (PTPPLGPPPPPVTAPPPV) shows a compositional bias: pro residues. The segment covering 456-471 (AEAPASAAAPEEQVQP) has biased composition (low complexity). Positions 472-481 (QRRRRPKIKQ) are enriched in basic residues. Residues 473–481 (RRRRPKIKQ) carry the Nuclear localization signal motif.

It belongs to the mycobacterial PPE family.

It localises to the secreted. It is found in the host cytoplasm. Its subcellular location is the host nucleus. Functionally, inhibits nitric oxide (NO) production in activated macrophages. Acts by inhibiting expression of the host inducible nitric oxide synthase (iNOS). PPE2 is translocated into the host macrophage nucleus, where it interacts with a GATA-binding site overlapping with the TATA box of NOS2 (iNOS) promoter, and strongly inhibits NOS2 gene transcription. Reduction in NO production in turn facilitates intracellular survival of the bacilli inside the macrophage. In addition, disrupts the assembly of NADPH oxidase complex, which inhibits NADPH oxidase-mediated reactive oxygen species (ROS) generation in macrophages and favors M.tuberculosis survival. Acts by interacting with NCF2, the cytosolic subunit of NADPH oxidase, and preventing translocation of NCF2 and NCF1 to the membrane, which causes a reduction of the functional assembly of NADPH oxidase complex and a decrease in NADPH oxidase activity. In Mycobacterium tuberculosis (strain CDC 1551 / Oshkosh), this protein is PPE family protein PPE2 (PPE2).